The primary structure comprises 715 residues: ATP-dependent zinc metalloprotease YME1L1 (715 aa).

Positions Val31–Ser54 are disordered. Over residues Gln41–Pro52 the composition is skewed to basic and acidic residues. A helical transmembrane segment spans residues Ile238–Val258. Positions 283, 325, 326, 327, 328, and 329 each coordinate ATP. Zn(2+) is bound at residue His541. Glu542 is an active-site residue. Zn(2+) contacts are provided by His545 and Asp619.

This sequence in the N-terminal section; belongs to the AAA ATPase family. In the C-terminal section; belongs to the peptidase M41 family. In terms of assembly, homohexamer; may also form heterohexamers. Exists in several complexes of 600-1100 kDa. Interacts with AFG1L. It depends on Zn(2+) as a cofactor. In terms of processing, proteolytically processed by mitochondrial processing peptidase (MPP) to generate the mature form. Degraded in an OMA1-dependent manner in response to oxidative stress.

The protein resides in the mitochondrion inner membrane. It is found in the mitochondrion. It catalyses the reaction ATP + H2O = ADP + phosphate + H(+). Its function is as follows. ATP-dependent metalloprotease that catalyzes the degradation of folded and unfolded proteins with a suitable degron sequence in the mitochondrial intermembrane region. Plays an important role in regulating mitochondrial morphology and function by cleaving OPA1 at position S2, giving rise to a form of OPA1 that promotes maintenance of normal mitochondrial structure and mitochondrial protein metabolism. Ensures cell proliferation, maintains normal cristae morphology and complex I respiration activity, promotes antiapoptotic activity and protects mitochondria from the accumulation of oxidatively damaged membrane proteins. Required to control the accumulation of nonassembled respiratory chain subunits (NDUFB6, OX4 and ND1). Involved in the mitochondrial adaptation in response to various signals, such as stress or developmental cues, by mediating degradation of mitochondrial proteins to rewire the mitochondrial proteome. Catalyzes degradation of mitochondrial proteins, such as translocases, lipid transfer proteins and metabolic enzymes in response to nutrient starvation in order to limit mitochondrial biogenesis: mechanistically, YME1L is activated by decreased phosphatidylethanolamine levels caused by LPIN1 activity in response to mTORC1 inhibition. Acts as a regulator of adult neural stem cell self-renewal by promoting mitochondrial proteome rewiring, preserving neural stem and progenitor cells self-renewal. Required for normal, constitutive degradation of PRELID1. Catalyzes the degradation of OMA1 in response to membrane depolarization. Mediates degradation of TIMM17A downstream of the integrated stress response (ISR). Catalyzes degradation of MICU1 when MICU1 is not assembled via an interchain disulfide. In Rattus norvegicus (Rat), this protein is ATP-dependent zinc metalloprotease YME1L1 (Yme1l1).